We begin with the raw amino-acid sequence, 217 residues long: Probable GTP-binding protein EngB (217 aa).

The EngB-type G domain occupies 40–217 (DVPEIAFAGR…RAAVLQDAMG (178 aa)). GTP is bound by residues 48–55 (GRSNVGKS), 75–79 (GRTQE), 95–98 (DMPG), 162–165 (TKAD), and 196–198 (TSS). Mg(2+) contacts are provided by S55 and T77.

Belongs to the TRAFAC class TrmE-Era-EngA-EngB-Septin-like GTPase superfamily. EngB GTPase family. Mg(2+) serves as cofactor.

In terms of biological role, necessary for normal cell division and for the maintenance of normal septation. The sequence is that of Probable GTP-binding protein EngB from Novosphingobium aromaticivorans (strain ATCC 700278 / DSM 12444 / CCUG 56034 / CIP 105152 / NBRC 16084 / F199).